Reading from the N-terminus, the 179-residue chain is Natural killer cells antigen CD94 (179 aa).

Topologically, residues 1–10 (MAVFKTTLWR) are cytoplasmic. A helical; Signal-anchor for type II membrane protein membrane pass occupies residues 11–31 (LISGTLGIICLSLMSTLGILL). Over 32–179 (KNSFTKLSIE…NRYICKQQLI (148 aa)) the chain is Extracellular. Cystine bridges form between cysteine 58–cysteine 70 and cysteine 61–cysteine 72. Positions 68-175 (YRCNCYFISS…CEDKNRYICK (108 aa)) constitute a C-type lectin domain. Asparagine 83 and asparagine 132 each carry an N-linked (GlcNAc...) asparagine glycan. 2 disulfide bridges follow: cysteine 89/cysteine 174 and cysteine 152/cysteine 166.

In terms of assembly, can form disulfide-bonded heterodimer with NKG2 family members KLRC1 and KLRC2. KLRD1-KLRC1 heterodimer interacts with peptide-bound HLA-E-B2M heterotrimeric complex. KLRD1 plays a prominent role in directly interacting with HLA-E. KLRD1-KLRC1 interacts with much higher affinity with peptide-bound HLA-E-B2M than KLRD1-KLRC2. Interacts with the adapter protein TYROBP/DAP12; this interaction is required for cell surface expression and cell activation. Expressed in NK cell subsets (at protein level). Expressed in memory/effector CD8-positive alpha-beta T cell subsets (at protein level). Expressed in melanoma-specific cytotoxic T cell clones (at protein level). Expressed in terminally differentiated cytotoxic gamma-delta T cells (at protein level). KLRD1-KLRC1 and KLRD1-KLRC2 are differentially expressed in NK and T cell populations, with only minor subsets expressing both receptor complexes (at protein level).

It localises to the cell membrane. Immune receptor involved in self-nonself discrimination. In complex with KLRC1 or KLRC2 on cytotoxic and regulatory lymphocyte subsets, recognizes non-classical major histocompatibility (MHC) class Ib molecule HLA-E loaded with self-peptides derived from the signal sequence of classical MHC class Ia and non-classical MHC class Ib molecules. Enables cytotoxic cells to monitor the expression of MHC class I molecules in healthy cells and to tolerate self. Primarily functions as a ligand binding subunit as it lacks the capacity to signal. Functionally, KLRD1-KLRC1 acts as an immune inhibitory receptor. Key inhibitory receptor on natural killer (NK) cells that regulates their activation and effector functions. Dominantly counteracts T cell receptor signaling on a subset of memory/effector CD8-positive T cells as part of an antigen-driven response to avoid autoimmunity. On intraepithelial CD8-positive gamma-delta regulatory T cells triggers TGFB1 secretion, which in turn limits the cytotoxic programming of intraepithelial CD8-positive alpha-beta T cells, distinguishing harmless from pathogenic antigens. In HLA-E-rich tumor microenvironment, acts as an immune inhibitory checkpoint and may contribute to progressive loss of effector functions of NK cells and tumor-specific T cells, a state known as cell exhaustion. Upon HLA-E-peptide binding, transmits intracellular signals through KLRC1 immunoreceptor tyrosine-based inhibition motifs (ITIMs) by recruiting INPP5D/SHIP-1 and INPPL1/SHIP-2 tyrosine phosphatases to ITIMs, and ultimately opposing signals transmitted by activating receptors through dephosphorylation of proximal signaling molecules. In terms of biological role, KLRD1-KLRC2 acts as an immune activating receptor. On cytotoxic lymphocyte subsets recognizes HLA-E loaded with signal sequence-derived peptides from non-classical MHC class Ib HLA-G molecules, likely playing a role in the generation and effector functions of adaptive NK cells and in maternal-fetal tolerance during pregnancy. Regulates the effector functions of terminally differentiated cytotoxic lymphocyte subsets, and in particular may play a role in adaptive NK cell response to viral infection. Upon HLA-E-peptide binding, transmits intracellular signals via the adapter protein TYROBP/DAP12, triggering the phosphorylation of proximal signaling molecules and cell activation. Its function is as follows. (Microbial infection) Viruses like human cytomegalovirus have evolved an escape mechanism whereby virus-induced down-regulation of host MHC class I molecules is coupled to the binding of viral peptides to HLA-E, restoring HLA-E expression and inducing HLA-E-dependent NK cell immune tolerance to infected cells. Recognizes HLA-E in complex with human cytomegalovirus UL40-derived peptide (VMAPRTLIL) and inhibits NK cell cytotoxicity. (Microbial infection) May recognize HLA-E in complex with HIV-1 gag/Capsid protein p24-derived peptide (AISPRTLNA) on infected cells and may inhibit NK cell cytotoxicity, a mechanism that allows HIV-1 to escape immune recognition. Functionally, (Microbial infection) Upon SARS-CoV-2 infection, may contribute to functional exhaustion of cytotoxic NK cells and CD8-positive T cells. On NK cells, may recognize HLA-E in complex with SARS-CoV-2 S/Spike protein S1-derived peptide (LQPRTFLL) expressed on the surface of lung epithelial cells, inducing NK cell exhaustion and dampening antiviral immune surveillance. The protein is Natural killer cells antigen CD94 (KLRD1) of Homo sapiens (Human).